The following is a 193-amino-acid chain: Ion-translocating oxidoreductase complex subunit A (193 aa).

6 helical membrane-spanning segments follow: residues 5 to 25 (FFFILSNILIDNFILVKFLGL), 47 to 67 (FVVVVSTVLLWFVNFFILLPF), 72 to 92 (LRIIVYMLIISFGVQLIEIIL), 102 to 122 (ILGIFLPLITTNCAVLAIPLF), 134 to 154 (ILYAVSASFGFTLVMVIFSSI), and 171 to 191 (PIVLITVSLISIVFMGFKGLV).

This sequence belongs to the NqrDE/RnfAE family. The complex is composed of six subunits: RnfA, RnfB, RnfC, RnfD, RnfE and RnfG.

The protein resides in the cell inner membrane. Its function is as follows. Part of a membrane-bound complex that couples electron transfer with translocation of ions across the membrane. This is Ion-translocating oxidoreductase complex subunit A from Buchnera aphidicola subsp. Schizaphis graminum (strain Sg).